A 459-amino-acid chain; its full sequence is Magnesium transporter MRS2-11, chloroplastic (459 aa).

The N-terminal 62 residues, 1–62 (MALTPIPSTF…EALKVLSRSK (62 aa)), are a transit peptide targeting the chloroplast. A disordered region spans residues 76–122 (GDYESLNVSDDDDGSDSNSSDGDNGGGRDDSKKIDSSSSSSSSDSTS). A compositionally biased stretch (basic and acidic residues) spans 101-110 (GGRDDSKKID). Residues 111-122 (SSSSSSSSDSTS) show a composition bias toward low complexity. 2 consecutive transmembrane segments (helical) span residues 397–417 (LLLQVGTFCVAVGALIAGIFG) and 430–450 (AFWLTTGGIIIGAAVAFFLMY). The Required for magnesium transport activity motif lies at 417–419 (GMN).

The protein belongs to the CorA metal ion transporter (MIT) (TC 1.A.35.5) family. In terms of tissue distribution, expressed in the green part of the plant. Preferentially expressed in the spongy mesophyll cells and stomata of young leaves but also detected in cotyledons and at the base of the leaf petioles.

It is found in the plastid. The protein resides in the chloroplast membrane. Its function is as follows. High-affinity magnesium transporter that mediates the influx of magnesium in chloroplast. The sequence is that of Magnesium transporter MRS2-11, chloroplastic (MRS2-11) from Arabidopsis thaliana (Mouse-ear cress).